The primary structure comprises 1086 residues: Isoleucine--tRNA ligase (1086 aa).

Residues proline 53–histidine 63 carry the 'HIGH' region motif. The short motif at lysine 624–arginine 628 is the 'KMSKS' region element. Lysine 627 lines the ATP pocket.

It belongs to the class-I aminoacyl-tRNA synthetase family. IleS type 2 subfamily. In terms of assembly, monomer. The cofactor is Zn(2+).

The protein resides in the cytoplasm. The enzyme catalyses tRNA(Ile) + L-isoleucine + ATP = L-isoleucyl-tRNA(Ile) + AMP + diphosphate. Catalyzes the attachment of isoleucine to tRNA(Ile). As IleRS can inadvertently accommodate and process structurally similar amino acids such as valine, to avoid such errors it has two additional distinct tRNA(Ile)-dependent editing activities. One activity is designated as 'pretransfer' editing and involves the hydrolysis of activated Val-AMP. The other activity is designated 'posttransfer' editing and involves deacylation of mischarged Val-tRNA(Ile). This chain is Isoleucine--tRNA ligase, found in Rickettsia typhi (strain ATCC VR-144 / Wilmington).